A 278-amino-acid polypeptide reads, in one-letter code: Glycerophosphodiester phosphodiesterase GpdQ (278 aa).

Positions 8, 10, 50, 80, 156, 195, and 197 each coordinate Fe cation.

This sequence belongs to the cyclic nucleotide phosphodiesterase class-III family. Fe(2+) serves as cofactor.

The catalysed reaction is a sn-glycero-3-phosphodiester + H2O = an alcohol + sn-glycerol 3-phosphate + H(+). It carries out the reaction sn-glycero-3-phosphoethanolamine + H2O = ethanolamine + sn-glycerol 3-phosphate + H(+). Functionally, catalyzes the hydrolysis of the 3'-5' phosphodiester bond of glycerophosphodiesters such as glycerophosphorylethanolamine (GPE), a typical phospholipid metabolite. The chain is Glycerophosphodiester phosphodiesterase GpdQ from Enterobacter lignolyticus (strain SCF1).